Reading from the N-terminus, the 789-residue chain is Molybdenum cofactor sulfurase (789 aa).

Lys-251 is modified (N6-(pyridoxal phosphate)lysine). Cys-422 is an active-site residue. An MOSC domain is found at 628–789 (GDQVAQWLDQ…LICGETLEVD (162 aa)). Ser-741 bears the Phosphoserine mark.

It belongs to the class-V pyridoxal-phosphate-dependent aminotransferase family. MOCOS subfamily. It depends on pyridoxal 5'-phosphate as a cofactor.

It carries out the reaction Mo-molybdopterin + L-cysteine + AH2 = thio-Mo-molybdopterin + L-alanine + A + H2O. It participates in cofactor biosynthesis; molybdopterin biosynthesis. Functionally, sulfurates the molybdenum cofactor. Sulfation of molybdenum is essential for xanthine dehydrogenase (XDH) and aldehyde oxidase (ADO) enzymes in which molybdenum cofactor is liganded by 1 oxygen and 1 sulfur atom in active form. The polypeptide is Molybdenum cofactor sulfurase (Drosophila willistoni (Fruit fly)).